The primary structure comprises 288 residues: N-acetylneuraminate lyase (288 aa).

Residues Ser-44 and Thr-45 each contribute to the aceneuramate site. The active-site Proton donor is Tyr-133. The Schiff-base intermediate with substrate role is filled by Lys-161. The aceneuramate site is built by Thr-163, Gly-185, Asp-187, Glu-188, and Ser-204.

Belongs to the DapA family. NanA subfamily. As to quaternary structure, homotetramer.

The protein localises to the cytoplasm. The enzyme catalyses aceneuramate = aldehydo-N-acetyl-D-mannosamine + pyruvate. The protein operates within amino-sugar metabolism; N-acetylneuraminate degradation; D-fructose 6-phosphate from N-acetylneuraminate: step 1/5. Its function is as follows. Catalyzes the reversible aldol cleavage of N-acetylneuraminic acid (sialic acid; Neu5Ac) to form pyruvate and N-acetylmannosamine (ManNAc) via a Schiff base intermediate. The chain is N-acetylneuraminate lyase from Clostridium perfringens (strain SM101 / Type A).